The following is a 187-amino-acid chain: Ribosome-recycling factor (187 aa).

The protein belongs to the RRF family.

The protein localises to the cytoplasm. Responsible for the release of ribosomes from messenger RNA at the termination of protein biosynthesis. May increase the efficiency of translation by recycling ribosomes from one round of translation to another. This is Ribosome-recycling factor from Ligilactobacillus salivarius (strain UCC118) (Lactobacillus salivarius).